A 346-amino-acid polypeptide reads, in one-letter code: N-acetyl-gamma-glutamyl-phosphate reductase (346 aa).

Cys150 is a catalytic residue.

Belongs to the NAGSA dehydrogenase family. Type 1 subfamily.

It localises to the cytoplasm. It carries out the reaction N-acetyl-L-glutamate 5-semialdehyde + phosphate + NADP(+) = N-acetyl-L-glutamyl 5-phosphate + NADPH + H(+). Its pathway is amino-acid biosynthesis; L-arginine biosynthesis; N(2)-acetyl-L-ornithine from L-glutamate: step 3/4. Functionally, catalyzes the NADPH-dependent reduction of N-acetyl-5-glutamyl phosphate to yield N-acetyl-L-glutamate 5-semialdehyde. This Acetivibrio thermocellus (strain ATCC 27405 / DSM 1237 / JCM 9322 / NBRC 103400 / NCIMB 10682 / NRRL B-4536 / VPI 7372) (Clostridium thermocellum) protein is N-acetyl-gamma-glutamyl-phosphate reductase.